The sequence spans 130 residues: Large-conductance mechanosensitive channel (130 aa).

2 consecutive transmembrane segments (helical) span residues 11-31 (FALKGNVLDLAVAVVIGAAFG) and 70-90 (GAFIQSIVDFIIIAFAIFIFV).

Belongs to the MscL family. In terms of assembly, homopentamer.

The protein resides in the cell membrane. Channel that opens in response to stretch forces in the membrane lipid bilayer. May participate in the regulation of osmotic pressure changes within the cell. In Listeria welshimeri serovar 6b (strain ATCC 35897 / DSM 20650 / CCUG 15529 / CIP 8149 / NCTC 11857 / SLCC 5334 / V8), this protein is Large-conductance mechanosensitive channel.